A 367-amino-acid chain; its full sequence is Methylated-thiol--coenzyme M methyltransferase (367 aa).

The Zn(2+) site is built by histidine 236, cysteine 238, and cysteine 313.

Belongs to the uroporphyrinogen decarboxylase family. As to quaternary structure, homodimer. Zn(2+) is required as a cofactor.

The enzyme catalyses methanethiol + coenzyme M = methyl-coenzyme M + hydrogen sulfide + H(+). In terms of biological role, methyltransferase involved in methanogenesis from methylated-thiols. Catalyzes two successive steps: mediates the transfer of a methyl group from the substrate to the cobalt cofactor of a methylated-thiol-specific corrinoid protein (MtsB), and the subsequent transfer of the methyl group from the corrinoid protein to coenzyme M. This chain is Methylated-thiol--coenzyme M methyltransferase (mtsA), found in Methanosarcina mazei (strain ATCC BAA-159 / DSM 3647 / Goe1 / Go1 / JCM 11833 / OCM 88) (Methanosarcina frisia).